A 273-amino-acid polypeptide reads, in one-letter code: Phosphate import ATP-binding protein PstB 1 (273 aa).

In terms of domain architecture, ABC transporter spans I27 to I268. G59–S66 is a binding site for ATP.

Belongs to the ABC transporter superfamily. Phosphate importer (TC 3.A.1.7) family. As to quaternary structure, the complex is composed of two ATP-binding proteins (PstB), two transmembrane proteins (PstC and PstA) and a solute-binding protein (PstS).

It is found in the cell inner membrane. The catalysed reaction is phosphate(out) + ATP + H2O = ADP + 2 phosphate(in) + H(+). Its function is as follows. Part of the ABC transporter complex PstSACB involved in phosphate import. Responsible for energy coupling to the transport system. The sequence is that of Phosphate import ATP-binding protein PstB 1 from Vibrio cholerae serotype O1 (strain ATCC 39315 / El Tor Inaba N16961).